We begin with the raw amino-acid sequence, 169 residues long: Peptide methionine sulfoxide reductase MsrA (169 aa).

Residue Cys10 is part of the active site.

The protein belongs to the MsrA Met sulfoxide reductase family.

It catalyses the reaction L-methionyl-[protein] + [thioredoxin]-disulfide + H2O = L-methionyl-(S)-S-oxide-[protein] + [thioredoxin]-dithiol. The enzyme catalyses [thioredoxin]-disulfide + L-methionine + H2O = L-methionine (S)-S-oxide + [thioredoxin]-dithiol. Has an important function as a repair enzyme for proteins that have been inactivated by oxidation. Catalyzes the reversible oxidation-reduction of methionine sulfoxide in proteins to methionine. The chain is Peptide methionine sulfoxide reductase MsrA from Streptococcus agalactiae serotype Ia (strain ATCC 27591 / A909 / CDC SS700).